Reading from the N-terminus, the 613-residue chain is Dihydroxy-acid dehydratase (613 aa).

D81 lines the Mg(2+) pocket. Position 122 (C122) interacts with [2Fe-2S] cluster. Residues D123 and K124 each coordinate Mg(2+). K124 is modified (N6-carboxylysine). C193 contributes to the [2Fe-2S] cluster binding site. Mg(2+) is bound at residue E489. S515 acts as the Proton acceptor in catalysis.

It belongs to the IlvD/Edd family. As to quaternary structure, homodimer. [2Fe-2S] cluster is required as a cofactor. Requires Mg(2+) as cofactor.

It carries out the reaction (2R)-2,3-dihydroxy-3-methylbutanoate = 3-methyl-2-oxobutanoate + H2O. It catalyses the reaction (2R,3R)-2,3-dihydroxy-3-methylpentanoate = (S)-3-methyl-2-oxopentanoate + H2O. It participates in amino-acid biosynthesis; L-isoleucine biosynthesis; L-isoleucine from 2-oxobutanoate: step 3/4. It functions in the pathway amino-acid biosynthesis; L-valine biosynthesis; L-valine from pyruvate: step 3/4. Functions in the biosynthesis of branched-chain amino acids. Catalyzes the dehydration of (2R,3R)-2,3-dihydroxy-3-methylpentanoate (2,3-dihydroxy-3-methylvalerate) into 2-oxo-3-methylpentanoate (2-oxo-3-methylvalerate) and of (2R)-2,3-dihydroxy-3-methylbutanoate (2,3-dihydroxyisovalerate) into 2-oxo-3-methylbutanoate (2-oxoisovalerate), the penultimate precursor to L-isoleucine and L-valine, respectively. This is Dihydroxy-acid dehydratase from Pseudomonas fluorescens (strain SBW25).